A 195-amino-acid chain; its full sequence is Phosphoribosylglycinamide formyltransferase (195 aa).

A N(1)-(5-phospho-beta-D-ribosyl)glycinamide-binding site is contributed by G12–N14. (6R)-10-formyltetrahydrofolate-binding positions include K65, M90–I93, and N107. The active-site Proton donor is H109.

It belongs to the GART family.

The enzyme catalyses N(1)-(5-phospho-beta-D-ribosyl)glycinamide + (6R)-10-formyltetrahydrofolate = N(2)-formyl-N(1)-(5-phospho-beta-D-ribosyl)glycinamide + (6S)-5,6,7,8-tetrahydrofolate + H(+). The protein operates within purine metabolism; IMP biosynthesis via de novo pathway; N(2)-formyl-N(1)-(5-phospho-D-ribosyl)glycinamide from N(1)-(5-phospho-D-ribosyl)glycinamide (10-formyl THF route): step 1/1. In terms of biological role, catalyzes the transfer of a formyl group from 10-formyltetrahydrofolate to 5-phospho-ribosyl-glycinamide (GAR), producing 5-phospho-ribosyl-N-formylglycinamide (FGAR) and tetrahydrofolate. The polypeptide is Phosphoribosylglycinamide formyltransferase (Bacillus subtilis (strain 168)).